The chain runs to 371 residues: Assembly protein G7 (371 aa).

It belongs to the chordopoxvirinae G7 family. As to quaternary structure, part of a complex composed of A30, G7, F10 kinase, A15, D2, D3, and J1. In terms of processing, phosphorylated on serines by F10 kinase, phosphorylation state is regulated by H1 phosphatase. Undergoes proteolytic processing during morphogenesis, probably required for the transformation of immature virions (IV) into mature virions (MV).

The protein localises to the host cytoplasm. It localises to the virion. Functionally, late protein which is a part of a large complex required for early virion morphogenesis. This complex participates in the formation of virosomes and the incorporation of virosomal contents into nascent immature virions. The chain is Assembly protein G7 from Homo sapiens (Human).